Here is a 302-residue protein sequence, read N- to C-terminus: Hydra actinoporin-like toxin 4 (302 aa).

The first 17 residues, 1–17 (MLLFKLIVCFFFIFAIG), serve as a signal peptide directing secretion. The disordered stretch occupies residues 22–93 (KKDETSGENE…PAPKQTTTKK (72 aa)). Over residues 60–75 (KPPAAKPPAASKITKP) the composition is skewed to low complexity. Positions 76–86 (QVPPQKKPPAP) are enriched in pro residues. The Cell attachment site motif lies at 274-276 (KAG).

Belongs to the actinoporin family. HALT subfamily. Octamer or nonamer in membranes. Monomer in the soluble state. In vitro, interacts with folate receptor alpha (of target organism).

It localises to the nematocyst. The protein localises to the secreted. The protein resides in the target cell membrane. In terms of biological role, pore-forming protein that forms hydrophilic pores and causes cytolysis. Compared to equinatoxin-2 (AC P61914), it reveals lower cytolysis activity (5-12-fold difference, tested on erythrocytes), a larger pore size (probably 2-3 nm) and different affinity to membrane lipids (100-fold lower affinity to sphingomyelin). Binds to sulfatides. Shows cytolytic activity on HeLa cells, with a different potency than its paralogs (from most potent to less potent: HALT-4&gt;HALT-6~HALT-1&gt;HALT-3&gt;HALT-7&gt;HALT-2). This recombinant protein has the highest cytolytic activity compared to other rHALT proteins, probably due to its longer N-terminal sequence that may penetrate the lipid bilayer more effectively. Pore formation is a multi-step process that involves specific recognition of membrane lipid by a protein aromatic residues rich region, firm binding to the membrane (mainly driven by hydrophobic interactions) accompanied by the transfer of the N-terminal region to the lipid-water interface and finally pore formation after oligomerization of monomers. In vitro, binds to the folate receptor alpha (FOLR1), a GPI-anchored membrane protein that plays a major role in the uptake of folate/folic acid into cells via endocytosis, suggesting a possible involvement of this receptor in the mechanism of HALT-1-induced cell lysis. In vivo, does not cause visible paralysis in larvae of the blowfly Sarcophaga faculata, the most common arthropod prey of Hydra. The chain is Hydra actinoporin-like toxin 4 from Hydra vulgaris (Hydra).